We begin with the raw amino-acid sequence, 203 residues long: Thymidylate kinase (203 aa).

10–17 (GIDGSGKS) is an ATP binding site.

Belongs to the thymidylate kinase family.

It carries out the reaction dTMP + ATP = dTDP + ADP. Functionally, phosphorylation of dTMP to form dTDP in both de novo and salvage pathways of dTTP synthesis. In Brachyspira hyodysenteriae (strain ATCC 49526 / WA1), this protein is Thymidylate kinase.